A 394-amino-acid chain; its full sequence is Elongation factor Tu 1 (394 aa).

The tr-type G domain occupies 10–204 (KPHVNVGTIG…FLDSYIPEPE (195 aa)). The segment at 19–26 (GHVDHGKT) is G1. 19–26 (GHVDHGKT) serves as a coordination point for GTP. Thr-26 provides a ligand contact to Mg(2+). Residues 60–64 (GITIN) form a G2 region. Residues 81 to 84 (DCPG) are G3. GTP contacts are provided by residues 81 to 85 (DCPGH) and 136 to 139 (NKCD). The interval 136 to 139 (NKCD) is G4. The segment at 174–176 (SAL) is G5.

Belongs to the TRAFAC class translation factor GTPase superfamily. Classic translation factor GTPase family. EF-Tu/EF-1A subfamily. Monomer.

Its subcellular location is the cytoplasm. It catalyses the reaction GTP + H2O = GDP + phosphate + H(+). Functionally, GTP hydrolase that promotes the GTP-dependent binding of aminoacyl-tRNA to the A-site of ribosomes during protein biosynthesis. This chain is Elongation factor Tu 1, found in Shigella flexneri serotype 5b (strain 8401).